The primary structure comprises 100 residues: Urease subunit gamma (100 aa).

Belongs to the urease gamma subunit family. As to quaternary structure, heterotrimer of UreA (gamma), UreB (beta) and UreC (alpha) subunits. Three heterotrimers associate to form the active enzyme.

The protein resides in the cytoplasm. The catalysed reaction is urea + 2 H2O + H(+) = hydrogencarbonate + 2 NH4(+). It participates in nitrogen metabolism; urea degradation; CO(2) and NH(3) from urea (urease route): step 1/1. In Proteus hauseri, this protein is Urease subunit gamma.